A 104-amino-acid chain; its full sequence is Large ribosomal subunit protein uL24 (104 aa).

The protein belongs to the universal ribosomal protein uL24 family. As to quaternary structure, part of the 50S ribosomal subunit.

In terms of biological role, one of two assembly initiator proteins, it binds directly to the 5'-end of the 23S rRNA, where it nucleates assembly of the 50S subunit. Its function is as follows. One of the proteins that surrounds the polypeptide exit tunnel on the outside of the subunit. The sequence is that of Large ribosomal subunit protein uL24 from Caulobacter sp. (strain K31).